A 363-amino-acid chain; its full sequence is Small ribosomal subunit biogenesis GTPase RsgA (363 aa).

Positions 112 to 268 constitute a CP-type G domain; it reads HQQVIAANID…LIDTPGMREL (157 aa). GTP-binding positions include 157–160 and 210–218; these read TKAD and GSSGAGKST. Residues Cys291, Cys296, His298, and Cys304 each contribute to the Zn(2+) site. Residues 340–363 are disordered; it reads RVAQNNRGKGSGKRPASVDRPGRR.

The protein belongs to the TRAFAC class YlqF/YawG GTPase family. RsgA subfamily. Monomer. Associates with 30S ribosomal subunit, binds 16S rRNA. It depends on Zn(2+) as a cofactor.

The protein localises to the cytoplasm. One of several proteins that assist in the late maturation steps of the functional core of the 30S ribosomal subunit. Helps release RbfA from mature subunits. May play a role in the assembly of ribosomal proteins into the subunit. Circularly permuted GTPase that catalyzes slow GTP hydrolysis, GTPase activity is stimulated by the 30S ribosomal subunit. This chain is Small ribosomal subunit biogenesis GTPase RsgA, found in Xanthomonas campestris pv. campestris (strain 8004).